A 228-amino-acid chain; its full sequence is Translation initiation factor 6 (228 aa).

In terms of biological role, binds to the 50S ribosomal subunit and prevents its association with the 30S ribosomal subunit to form the 70S initiation complex. The polypeptide is Translation initiation factor 6 (Methanocaldococcus jannaschii (strain ATCC 43067 / DSM 2661 / JAL-1 / JCM 10045 / NBRC 100440) (Methanococcus jannaschii)).